A 175-amino-acid polypeptide reads, in one-letter code: Protein SELF-PRUNING (175 aa).

This sequence belongs to the phosphatidylethanolamine-binding protein family.

The protein localises to the cytoplasm. Not known. In plants homozygous for the recessive allele of the SP gene, sympodial segments develop progressively fewer nodes until the shoot is terminated by two consecutive. inflorescences. This is Protein SELF-PRUNING (SP) from Solanum lycopersicum (Tomato).